Reading from the N-terminus, the 460-residue chain is Dynactin subunit 4 (460 aa).

Ala-2 is subject to N-acetylalanine. Residues 152-172 adopt a coiled-coil conformation; the sequence is QQLAQKEKVERDRKKLARRRN. Position 196 is a phosphoserine (Ser-196). A Glycyl lysine isopeptide (Lys-Gly) (interchain with G-Cter in SUMO2) cross-link involves residue Lys-215. Thr-407 bears the Phosphothreonine mark.

This sequence belongs to the dynactin subunit 4 family. Subunit of dynactin, a multiprotein complex part of a tripartite complex with dynein and a adapter, such as BICDL1, BICD2 or HOOK3. The dynactin complex is built around ACTR1A/ACTB filament and consists of an actin-related filament composed of a shoulder domain, a pointed end and a barbed end. Its length is defined by its flexible shoulder domain. The soulder is composed of 2 DCTN1 subunits, 4 DCTN2 and 2 DCTN3. The 4 DCNT2 (via N-terminus) bind the ACTR1A filament and act as molecular rulers to determine the length. The pointed end is important for binding dynein-dynactin cargo adapters. Consists of 4 subunits: ACTR10, DCNT4, DCTN5 and DCTN6. The barbed end is composed of a CAPZA1:CAPZB heterodimers, which binds ACTR1A/ACTB filament and dynactin and stabilizes dynactin. Interacts with ATP7B, but not ATP7A, in a copper-dependent manner. Interacts with ANK2; this interaction is required for localization at costameres. Interacts with N4BP2L1.

The protein localises to the cytoplasm. It localises to the cytoskeleton. It is found in the microtubule organizing center. The protein resides in the centrosome. Its subcellular location is the stress fiber. The protein localises to the cell cortex. It localises to the myofibril. It is found in the sarcomere. Functionally, part of the dynactin complex that activates the molecular motor dynein for ultra-processive transport along microtubules. The chain is Dynactin subunit 4 (DCTN4) from Pongo abelii (Sumatran orangutan).